Here is a 481-residue protein sequence, read N- to C-terminus: Cysteine--tRNA ligase (481 aa).

A Zn(2+)-binding site is contributed by Cys29. The 'HIGH' region signature appears at 31 to 41 (PTVYDYSHLGH). Zn(2+) contacts are provided by Cys210, His235, and Glu239. Residues 272 to 276 (KMSKS) carry the 'KMSKS' region motif. Lys275 provides a ligand contact to ATP.

It belongs to the class-I aminoacyl-tRNA synthetase family. Monomer. Requires Zn(2+) as cofactor.

The protein resides in the cytoplasm. The catalysed reaction is tRNA(Cys) + L-cysteine + ATP = L-cysteinyl-tRNA(Cys) + AMP + diphosphate. In Anaeromyxobacter dehalogenans (strain 2CP-C), this protein is Cysteine--tRNA ligase.